Reading from the N-terminus, the 372-residue chain is Aminomethyltransferase (372 aa).

This sequence belongs to the GcvT family. The glycine cleavage system is composed of four proteins: P, T, L and H.

It catalyses the reaction N(6)-[(R)-S(8)-aminomethyldihydrolipoyl]-L-lysyl-[protein] + (6S)-5,6,7,8-tetrahydrofolate = N(6)-[(R)-dihydrolipoyl]-L-lysyl-[protein] + (6R)-5,10-methylene-5,6,7,8-tetrahydrofolate + NH4(+). Its function is as follows. The glycine cleavage system catalyzes the degradation of glycine. The chain is Aminomethyltransferase from Streptomyces avermitilis (strain ATCC 31267 / DSM 46492 / JCM 5070 / NBRC 14893 / NCIMB 12804 / NRRL 8165 / MA-4680).